Reading from the N-terminus, the 252-residue chain is Hydroxyacylglutathione hydrolase (252 aa).

Positions 54, 56, 58, 59, 111, 128, and 166 each coordinate Zn(2+).

The protein belongs to the metallo-beta-lactamase superfamily. Glyoxalase II family. As to quaternary structure, monomer. Requires Zn(2+) as cofactor.

The catalysed reaction is an S-(2-hydroxyacyl)glutathione + H2O = a 2-hydroxy carboxylate + glutathione + H(+). It participates in secondary metabolite metabolism; methylglyoxal degradation; (R)-lactate from methylglyoxal: step 2/2. Its function is as follows. Thiolesterase that catalyzes the hydrolysis of S-D-lactoyl-glutathione to form glutathione and D-lactic acid. The protein is Hydroxyacylglutathione hydrolase of Vibrio cholerae serotype O1 (strain ATCC 39541 / Classical Ogawa 395 / O395).